The chain runs to 448 residues: N-succinylarginine dihydrolase (448 aa).

Substrate-binding positions include 19-28, Asn110, and 137-138; these read AGLSSGNIAS and HR. Glu174 is an active-site residue. Arg216 serves as a coordination point for substrate. His252 is a catalytic residue. Residues Asp254 and Asn366 each contribute to the substrate site. Residue Cys372 is the Nucleophile of the active site.

The protein belongs to the succinylarginine dihydrolase family. As to quaternary structure, homodimer.

The catalysed reaction is N(2)-succinyl-L-arginine + 2 H2O + 2 H(+) = N(2)-succinyl-L-ornithine + 2 NH4(+) + CO2. The protein operates within amino-acid degradation; L-arginine degradation via AST pathway; L-glutamate and succinate from L-arginine: step 2/5. In terms of biological role, catalyzes the hydrolysis of N(2)-succinylarginine into N(2)-succinylornithine, ammonia and CO(2). The chain is N-succinylarginine dihydrolase from Legionella pneumophila (strain Corby).